We begin with the raw amino-acid sequence, 299 residues long: Probable phosphate butyryltransferase (299 aa).

It belongs to the phosphate acetyltransferase and butyryltransferase family.

The enzyme catalyses butanoyl-CoA + phosphate = butanoyl phosphate + CoA. Catalyzes the conversion of butyryl-CoA through butyryl phosphate to butyrate. This is Probable phosphate butyryltransferase (yqiS) from Bacillus subtilis (strain 168).